The chain runs to 591 residues: Aspartate--tRNA ligase (591 aa).

An L-aspartate-binding site is contributed by Glu171. The interval 195-198 (QLFK) is aspartate. An L-aspartate-binding site is contributed by Arg217. ATP-binding positions include 217–219 (RDE) and Gln226. His448 lines the L-aspartate pocket. ATP is bound at residue Glu482. Arg489 contacts L-aspartate. 534-537 (GLDR) contacts ATP.

Belongs to the class-II aminoacyl-tRNA synthetase family. Type 1 subfamily. As to quaternary structure, homodimer.

It is found in the cytoplasm. It carries out the reaction tRNA(Asp) + L-aspartate + ATP = L-aspartyl-tRNA(Asp) + AMP + diphosphate. Functionally, catalyzes the attachment of L-aspartate to tRNA(Asp) in a two-step reaction: L-aspartate is first activated by ATP to form Asp-AMP and then transferred to the acceptor end of tRNA(Asp). This Edwardsiella ictaluri (strain 93-146) protein is Aspartate--tRNA ligase.